Consider the following 436-residue polypeptide: MTEATYYFIGIKGSGMSALALVLHDLGHQVLGSDITQYTFTQKGLAAAGIKMLPFDPANLKPGYTVIAGNSFTDDHPEIKRAKELGLTIYRYHEFLGKLIEGYTSIGVAGAHGKTSTTGLLAHTLSGVAKTSYLIGDGTGKGIPDSKFFVFEADEYRRHFLAYHPDYMIMTNIDFDHPDYYTGFEDVYDAFETEANQVKKAIVAWGDDPWLRKLKAKVPVYYYGISDRDDFQARNVDRDTKGSSFDAYFHDQLIGHFFVPLFGEHSVLNALAVVAVAHMEKLDAKLIARELGNFSGVKRRFAEKDLKDMIIVDDYAHHPNEIKATLDAARQKYPDKAIIAVFQPHTFSRTQAYEPQYVQVLSQADQTFLTPIFSSAREKTGKIRSEDITAQIKGAAVIHQEDMKPLLQYHNAVVVFMGAGDIQKYEKAYETILAEE.

110 to 116 (GAHGKTS) is an ATP binding site.

The protein belongs to the MurCDEF family.

The protein resides in the cytoplasm. The enzyme catalyses UDP-N-acetyl-alpha-D-muramate + L-alanine + ATP = UDP-N-acetyl-alpha-D-muramoyl-L-alanine + ADP + phosphate + H(+). It functions in the pathway cell wall biogenesis; peptidoglycan biosynthesis. Its function is as follows. Cell wall formation. This is UDP-N-acetylmuramate--L-alanine ligase from Lacticaseibacillus paracasei (strain ATCC 334 / BCRC 17002 / CCUG 31169 / CIP 107868 / KCTC 3260 / NRRL B-441) (Lactobacillus paracasei).